A 421-amino-acid polypeptide reads, in one-letter code: Synaptotagmin-1 (421 aa).

Residues 1-57 lie on the Vesicular side of the membrane; the sequence is MVSASRPEALAAPVTTVATLVPHNATEPASPGEGKEDAFSKLKQKFMNELHKIPLPP. Asn24 is a glycosylation site (N-linked (GlcNAc...) asparagine). Residues 58–79 form a helical membrane-spanning segment; it reads WALIAIAIVAVLLVVTCCFCVC. 5 S-palmitoyl cysteine lipidation sites follow: Cys74, Cys75, Cys77, Cys79, and Cys82. The Cytoplasmic segment spans residues 80–421; that stretch reads KKCLFKKKNK…EVDAMLAVKK (342 aa). Residues 112-141 form a disordered region; it reads TMKDQALKDDDAETGLTDGEEKEEPKEEEK. Over residues 121-133 the composition is skewed to acidic residues; the sequence is DDAETGLTDGEEK. Thr128 is modified (phosphothreonine). Residues 135 to 381 are phospholipid binding; the sequence is EPKEEEKLGK…AIGKVFVGYN (247 aa). The region spanning 141-260 is the C2 1 domain; sequence KLGKLQYSLD…DFGHVTEEWR (120 aa). Residues Leu171, Asp172, and Asp178 each contribute to the Ca(2+) site. Phosphotyrosine is present on Tyr229. Ca(2+) contacts are provided by Asp230, Phe231, Asp232, Ser235, Lys236, and Asp238. Phosphoserine is present on Ser264. Residues 272-405 form the C2 2 domain; sequence KLGDICFSLR…NPRRPIAQWH (134 aa). Positions 303 and 309 each coordinate Ca(2+). Residues Ser342 and Ser344 each carry the phosphoserine modification. Ca(2+) is bound by residues Asp363, Asp365, and Asp371.

The protein belongs to the synaptotagmin family. As to quaternary structure, homotetramer. Heterodimer; heterodimerizes with SYT2 in presence of calcium. Interacts with SCAMP5. Interacts with STON2. Forms a complex with SV2B, syntaxin 1 and SNAP25. Interacts with SV2A, SV2B and SV2C. Interacts with RIMS1. Interacts with PRRT2. Interacts with DNAJC5 in a phosphorylation-dependent manner. Interacts (via N-terminus) with RAB3A. Interacts with SYT12. Interacts with calmodulin. Interacts with DNM1 (via C-terminal proline-rich domain (PRD)); this interaction facilitates vesicle fission during clathrin-mediated endocytosis (CME). Ca(2+) is required as a cofactor. Post-translationally, glycosylated. As to expression, expressed in the brain and adrenal medulla (at protein level).

It is found in the cytoplasmic vesicle. Its subcellular location is the secretory vesicle membrane. The protein localises to the secretory vesicle. It localises to the synaptic vesicle membrane. The protein resides in the chromaffin granule membrane. It is found in the cytoplasm. In terms of biological role, calcium sensor that participates in triggering neurotransmitter release at the synapse. May have a regulatory role in the membrane interactions during trafficking of synaptic vesicles at the active zone of the synapse. It binds acidic phospholipids with a specificity that requires the presence of both an acidic head group and a diacyl backbone. A Ca(2+)-dependent interaction between synaptotagmin and putative receptors for activated protein kinase C has also been reported. It can bind to at least three additional proteins in a Ca(2+)-independent manner; these are neurexins, syntaxin and AP2. Plays a role in dendrite formation by melanocytes. The protein is Synaptotagmin-1 of Mus musculus (Mouse).